We begin with the raw amino-acid sequence, 361 residues long: MDSRKLGELRAFVRLCKQNPGLLHTEELGFLREWVESMGGTIPPAPASTSTDETSKGKAEEQPEEPVKSPEPESEESDLEIDNEGVIEPDNDDPQEMGDENVEVTEEMMDQANEKKMEAINALSEGDLQKAVNLFTDAIKLNPCLAILYAKRASVFVKLQKPNAAIRDCDRAIKINPDSAQTYKWRGKAHRLLGHWEEAAHDLALACKLDYDEDASAMLKEVQPRAQKIAEHRRKYERKREEKEIKERMERVKKAREEHERAQREEEARRQAGGAQFGGFPGGFPGGFPGAMPGGMPGMAGMPGLNEILSDPEVLAAMQDPEVMAAFQDVAQNPANMSKYQNNPKVMSLITKLSAKFGSKP.

The tract at residues 39 to 98 (GGTIPPAPASTSTDETSKGKAEEQPEEPVKSPEPESEESDLEIDNEGVIEPDNDDPQEMG) is disordered. The span at 53–71 (ETSKGKAEEQPEEPVKSPE) shows a compositional bias: basic and acidic residues. Residues 72-98 (PESEESDLEIDNEGVIEPDNDDPQEMG) are compositionally biased toward acidic residues. TPR repeat units lie at residues 112–145 (ANEKKMEAINALSEGDLQKAVNLFTDAIKLNPCL), 147–179 (ILYAKRASVFVKLQKPNAAIRDCDRAIKINPDS), and 181–213 (QTYKWRGKAHRLLGHWEEAAHDLALACKLDYDE). Residues 254-270 (KAREEHERAQREEEARR) are compositionally biased toward basic and acidic residues. Positions 254–292 (KAREEHERAQREEEARRQAGGAQFGGFPGGFPGGFPGAM) are disordered. Over residues 275 to 292 (AQFGGFPGGFPGGFPGAM) the composition is skewed to gly residues. Positions 311–350 (DPEVLAAMQDPEVMAAFQDVAQNPANMSKYQNNPKVMSLI) constitute an STI1 domain.

This sequence belongs to the FAM10 family. Homotetramer. Interacts with HSC70 as well as DNAJ homologs and HSP90.

Its subcellular location is the cytoplasm. One HIP oligomer binds the ATPase domains of at least two HSC70 molecules dependent on activation of the HSC70 ATPase by HSP40. Stabilizes the ADP state of HSC70 that has a high affinity for substrate protein. Through its own chaperone activity, it may contribute to the interaction of HSC70 with various target proteins. The polypeptide is Hsc70-interacting protein (ST13) (Gallus gallus (Chicken)).